We begin with the raw amino-acid sequence, 486 residues long: UDP-N-acetylmuramoyl-L-alanyl-D-glutamate--2,6-diaminopimelate ligase (486 aa).

Residue Ser-31 coordinates UDP-N-acetyl-alpha-D-muramoyl-L-alanyl-D-glutamate. 109–115 contributes to the ATP binding site; it reads GTNGKTT. Residues Asn-150, 151–152, Ser-178, and Arg-186 contribute to the UDP-N-acetyl-alpha-D-muramoyl-L-alanyl-D-glutamate site; that span reads TT. Lys-218 is modified (N6-carboxylysine). Residues Arg-381, 405–408, Gly-455, and Glu-459 contribute to the meso-2,6-diaminopimelate site; that span reads DNPR. Positions 405–408 match the Meso-diaminopimelate recognition motif motif; that stretch reads DNPR.

It belongs to the MurCDEF family. MurE subfamily. Mg(2+) serves as cofactor. Carboxylation is probably crucial for Mg(2+) binding and, consequently, for the gamma-phosphate positioning of ATP.

It is found in the cytoplasm. It catalyses the reaction UDP-N-acetyl-alpha-D-muramoyl-L-alanyl-D-glutamate + meso-2,6-diaminopimelate + ATP = UDP-N-acetyl-alpha-D-muramoyl-L-alanyl-gamma-D-glutamyl-meso-2,6-diaminopimelate + ADP + phosphate + H(+). Its pathway is cell wall biogenesis; peptidoglycan biosynthesis. In terms of biological role, catalyzes the addition of meso-diaminopimelic acid to the nucleotide precursor UDP-N-acetylmuramoyl-L-alanyl-D-glutamate (UMAG) in the biosynthesis of bacterial cell-wall peptidoglycan. This Halalkalibacterium halodurans (strain ATCC BAA-125 / DSM 18197 / FERM 7344 / JCM 9153 / C-125) (Bacillus halodurans) protein is UDP-N-acetylmuramoyl-L-alanyl-D-glutamate--2,6-diaminopimelate ligase.